Reading from the N-terminus, the 144-residue chain is D-aminoacyl-tRNA deacylase (144 aa).

The Gly-cisPro motif, important for rejection of L-amino acids motif lies at glycine 136–proline 137.

The protein belongs to the DTD family. As to quaternary structure, homodimer.

It localises to the cytoplasm. It carries out the reaction glycyl-tRNA(Ala) + H2O = tRNA(Ala) + glycine + H(+). It catalyses the reaction a D-aminoacyl-tRNA + H2O = a tRNA + a D-alpha-amino acid + H(+). Functionally, an aminoacyl-tRNA editing enzyme that deacylates mischarged D-aminoacyl-tRNAs. Also deacylates mischarged glycyl-tRNA(Ala), protecting cells against glycine mischarging by AlaRS. Acts via tRNA-based rather than protein-based catalysis; rejects L-amino acids rather than detecting D-amino acids in the active site. By recycling D-aminoacyl-tRNA to D-amino acids and free tRNA molecules, this enzyme counteracts the toxicity associated with the formation of D-aminoacyl-tRNA entities in vivo and helps enforce protein L-homochirality. The polypeptide is D-aminoacyl-tRNA deacylase (Haemophilus influenzae (strain 86-028NP)).